Reading from the N-terminus, the 104-residue chain is Large ribosomal subunit protein uL24 (104 aa).

It belongs to the universal ribosomal protein uL24 family. As to quaternary structure, part of the 50S ribosomal subunit.

In terms of biological role, one of two assembly initiator proteins, it binds directly to the 5'-end of the 23S rRNA, where it nucleates assembly of the 50S subunit. Its function is as follows. One of the proteins that surrounds the polypeptide exit tunnel on the outside of the subunit. This is Large ribosomal subunit protein uL24 from Shewanella halifaxensis (strain HAW-EB4).